Consider the following 31-residue polypeptide: Cytochrome b6-f complex subunit 6 (31 aa).

The chain crosses the membrane as a helical span at residues 4-26 (ITSYFGFLLAASTITPALFIGLS).

This sequence belongs to the PetL family. As to quaternary structure, the 4 large subunits of the cytochrome b6-f complex are cytochrome b6, subunit IV (17 kDa polypeptide, PetD), cytochrome f and the Rieske protein, while the 4 small subunits are PetG, PetL, PetM and PetN. The complex functions as a dimer.

The protein localises to the plastid. It is found in the chloroplast thylakoid membrane. Component of the cytochrome b6-f complex, which mediates electron transfer between photosystem II (PSII) and photosystem I (PSI), cyclic electron flow around PSI, and state transitions. PetL is important for photoautotrophic growth as well as for electron transfer efficiency and stability of the cytochrome b6-f complex. In Buxus microphylla (Littleleaf boxwood), this protein is Cytochrome b6-f complex subunit 6.